The chain runs to 237 residues: Sulfhydrogenase 2 subunit delta (237 aa).

Cys-11, Cys-14, Cys-83, Cys-132, Cys-160, Cys-163, Cys-170, and Cys-179 together coordinate [4Fe-4S] cluster. [3Fe-4S] cluster-binding residues include Cys-188, Cys-192, Cys-199, and Cys-202.

The protein belongs to the [NiFe]/[NiFeSe] hydrogenase small subunit family. In terms of assembly, dimer of heterotetramer of alpha, beta, gamma and delta subunits. The nickel-containing alpha and delta subunits constitute the hydrogenase activity. The beta and gamma subunits (flavin-containing dimer) constitute the sulfur reductase activity. The cofactor is Ni(2+). [4Fe-4S] cluster is required as a cofactor. [3Fe-4S] cluster serves as cofactor.

Its subcellular location is the cytoplasm. It catalyses the reaction H2 + NADP(+) = NADPH + H(+). It carries out the reaction H2 + NAD(+) = NADH + H(+). Part of a bifunctional enzyme complex that functions as a hydrogen-evolving hydrogenase with sulfur-reducing activity. May play a role in hydrogen cycling during fermentative growth. Activity exhibited with NAD in addition to NADPH. The alpha and delta subunits form the hydrogenase component that catalyzes the reduction of protons to evolve hydrogen. In Pyrococcus furiosus (strain ATCC 43587 / DSM 3638 / JCM 8422 / Vc1), this protein is Sulfhydrogenase 2 subunit delta.